A 146-amino-acid chain; its full sequence is Hemoglobin subunit beta (146 aa).

Valine 1 is subject to N-acetylvaline. A Globin domain is found at 2 to 146 (HLTAEEKSAV…VANALAHKYH (145 aa)). Phosphothreonine is present on threonine 12. The residue at position 44 (serine 44) is a Phosphoserine. Lysine 59 carries the post-translational modification N6-acetyllysine. Histidine 63 lines the heme b pocket. Lysine 82 bears the N6-acetyllysine mark. Histidine 92 serves as a coordination point for heme b. Cysteine 93 is subject to S-nitrosocysteine. Lysine 144 bears the N6-acetyllysine mark.

Belongs to the globin family. As to quaternary structure, heterotetramer of two alpha chains and two beta chains. Red blood cells.

Its function is as follows. Involved in oxygen transport from the lung to the various peripheral tissues. In Leptonychotes weddellii (Weddell seal), this protein is Hemoglobin subunit beta (HBB).